Reading from the N-terminus, the 318-residue chain is Putative 2-hydroxyacid dehydrogenase SH0752 (318 aa).

Residues 155–156 (EI), 234–236 (AGR), and aspartate 260 each bind NAD(+). Arginine 236 is a catalytic residue. Glutamate 265 is an active-site residue. Histidine 283 functions as the Proton donor in the catalytic mechanism. 283 to 286 (HIGN) contributes to the NAD(+) binding site.

The protein belongs to the D-isomer specific 2-hydroxyacid dehydrogenase family.

The polypeptide is Putative 2-hydroxyacid dehydrogenase SH0752 (Staphylococcus haemolyticus (strain JCSC1435)).